The following is a 114-amino-acid chain: Large ribosomal subunit protein P2v (114 aa).

The tract at residues 74 to 114 (VASGGGGGAAPAAEPASVESKKKEEEKEESEDDGGMMSLFD) is disordered. Ser103 is subject to Phosphoserine.

It belongs to the eukaryotic ribosomal protein P1/P2 family. P1 and P2 exist as dimers at the large ribosomal subunit. Phosphorylated.

Plays an important role in the elongation step of protein synthesis. This is Large ribosomal subunit protein P2v (RPP2E) from Arabidopsis thaliana (Mouse-ear cress).